Consider the following 262-residue polypeptide: Octanoyltransferase (262 aa).

The BPL/LPL catalytic domain maps to 60-248; the sequence is GTADELVWLV…AFEMVFGPTR (189 aa). Residues 99 to 106, 179 to 181, and 192 to 194 each bind substrate; these read RGGEYTYH, AIG, and GLS. C210 acts as the Acyl-thioester intermediate in catalysis.

Belongs to the LipB family.

The protein localises to the cytoplasm. It carries out the reaction octanoyl-[ACP] + L-lysyl-[protein] = N(6)-octanoyl-L-lysyl-[protein] + holo-[ACP] + H(+). It participates in protein modification; protein lipoylation via endogenous pathway; protein N(6)-(lipoyl)lysine from octanoyl-[acyl-carrier-protein]: step 1/2. Catalyzes the transfer of endogenously produced octanoic acid from octanoyl-acyl-carrier-protein onto the lipoyl domains of lipoate-dependent enzymes. Lipoyl-ACP can also act as a substrate although octanoyl-ACP is likely to be the physiological substrate. The sequence is that of Octanoyltransferase from Sinorhizobium medicae (strain WSM419) (Ensifer medicae).